The following is a 382-amino-acid chain: Glutamyl-tRNA reductase (382 aa).

Residues Thr-38–Arg-41, Ser-85, Glu-90–Gln-92, and Gln-96 each bind substrate. The active-site Nucleophile is Cys-39. Residue Gly-164–Gly-169 coordinates NADP(+).

This sequence belongs to the glutamyl-tRNA reductase family. In terms of assembly, homodimer.

The enzyme catalyses (S)-4-amino-5-oxopentanoate + tRNA(Glu) + NADP(+) = L-glutamyl-tRNA(Glu) + NADPH + H(+). It functions in the pathway porphyrin-containing compound metabolism; protoporphyrin-IX biosynthesis; 5-aminolevulinate from L-glutamyl-tRNA(Glu): step 1/2. In terms of biological role, catalyzes the NADPH-dependent reduction of glutamyl-tRNA(Glu) to glutamate 1-semialdehyde (GSA). The polypeptide is Glutamyl-tRNA reductase (Methanococcus maripaludis (strain DSM 14266 / JCM 13030 / NBRC 101832 / S2 / LL)).